The sequence spans 258 residues: UPF0246 protein VS_0505 (258 aa).

The protein belongs to the UPF0246 family.

In Vibrio atlanticus (strain LGP32) (Vibrio splendidus (strain Mel32)), this protein is UPF0246 protein VS_0505.